A 382-amino-acid chain; its full sequence is Albumin (382 aa).

Albumin domains are found at residues 1 to 178 (KCRI…ILLE) and 179 to 377 (AALK…GLLQ). Disulfide bonds link Cys-2-Cys-48, Cys-47-Cys-55, Cys-67-Cys-81, Cys-80-Cys-91, Cys-116-Cys-161, Cys-160-Cys-169, Cys-192-Cys-238, Cys-237-Cys-248, Cys-261-Cys-277, Cys-276-Cys-287, Cys-314-Cys-359, and Cys-358-Cys-367. Residues Asp-51 and Glu-54 each contribute to the Ca(2+) site. Asp-51 serves as a coordination point for Zn(2+).

Belongs to the ALB/AFP/VDB family. As to expression, plasma.

It localises to the secreted. Serum albumin, the main protein of plasma, has a good binding capacity for water, Ca(2+), Na(+), K(+), fatty acids, hormones, bilirubin and drugs. Its main function is the regulation of the colloidal osmotic pressure of blood. The sequence is that of Albumin (ALB) from Aquarana catesbeiana (American bullfrog).